We begin with the raw amino-acid sequence, 404 residues long: Alpha-galactosidase A (404 aa).

A signal peptide spans Met-1–Ala-23. Disulfide bonds link Cys-45-Cys-77 and Cys-124-Cys-154. Asp-152 functions as the Nucleophile in the catalytic mechanism. Glu-185 to Asn-189 is a substrate binding site. Asp-207 (proton donor) is an active-site residue.

Belongs to the glycosyl hydrolase 27 family.

It catalyses the reaction Hydrolysis of terminal, non-reducing alpha-D-galactose residues in alpha-D-galactosides, including galactose oligosaccharides, galactomannans and galactolipids.. Hydrolyzes galactomannan found in plant cell wall, by cleaving alpha-1,6-D-galactose side-chains from the mannan backbone. Appears to act in synergy with mannanase (ManA) to elicit hydrolysis of galactomannan. Has greater activity against galactomannans with decreased degree of polymerisation values. To a lesser extent, is also able to degrade other galactosides containing alpha-1,6-linked D-galactose, such as melibiose and stachyose. The chain is Alpha-galactosidase A (agaA) from Cellvibrio japonicus (strain Ueda107) (Pseudomonas fluorescens subsp. cellulosa).